The primary structure comprises 73 residues: UPF0435 protein OB1527 (73 aa).

It belongs to the UPF0435 family.

The sequence is that of UPF0435 protein OB1527 from Oceanobacillus iheyensis (strain DSM 14371 / CIP 107618 / JCM 11309 / KCTC 3954 / HTE831).